The sequence spans 251 residues: Adenosylcobinamide-GDP ribazoletransferase (251 aa).

The next 7 membrane-spanning stretches (helical) occupy residues 36–56 (LYPFIGLIIGALWYLSFFVLS), 60–80 (VPIMLMAALILTVPYILTGFL), 110–130 (VGAFSVISVVLLLLVEFAGMF), 141–161 (VLIFIPIASRAINGYFIVSQE), 181–201 (EIILLGIYVLVALITFFTLGI), 202–222 (NYLIAILAMGLISFILLLKVK), and 231–251 (DVAGYILVLMEFTGILLLGII).

Belongs to the CobS family. Mg(2+) is required as a cofactor.

It localises to the cell membrane. It catalyses the reaction alpha-ribazole + adenosylcob(III)inamide-GDP = adenosylcob(III)alamin + GMP + H(+). The catalysed reaction is alpha-ribazole 5'-phosphate + adenosylcob(III)inamide-GDP = adenosylcob(III)alamin 5'-phosphate + GMP + H(+). It participates in cofactor biosynthesis; adenosylcobalamin biosynthesis; adenosylcobalamin from cob(II)yrinate a,c-diamide: step 7/7. In terms of biological role, joins adenosylcobinamide-GDP and alpha-ribazole to generate adenosylcobalamin (Ado-cobalamin). Also synthesizes adenosylcobalamin 5'-phosphate from adenosylcobinamide-GDP and alpha-ribazole 5'-phosphate. This Clostridium perfringens (strain 13 / Type A) protein is Adenosylcobinamide-GDP ribazoletransferase.